The following is a 98-amino-acid chain: Large ribosomal subunit protein uL23 (98 aa).

This sequence belongs to the universal ribosomal protein uL23 family. As to quaternary structure, part of the 50S ribosomal subunit. Contacts protein L29, and trigger factor when it is bound to the ribosome.

Functionally, one of the early assembly proteins it binds 23S rRNA. One of the proteins that surrounds the polypeptide exit tunnel on the outside of the ribosome. Forms the main docking site for trigger factor binding to the ribosome. This is Large ribosomal subunit protein uL23 from Rickettsia africae (strain ESF-5).